Reading from the N-terminus, the 570-residue chain is Proline--tRNA ligase (570 aa).

The protein belongs to the class-II aminoacyl-tRNA synthetase family. ProS type 1 subfamily. Homodimer.

The protein localises to the cytoplasm. The enzyme catalyses tRNA(Pro) + L-proline + ATP = L-prolyl-tRNA(Pro) + AMP + diphosphate. Functionally, catalyzes the attachment of proline to tRNA(Pro) in a two-step reaction: proline is first activated by ATP to form Pro-AMP and then transferred to the acceptor end of tRNA(Pro). As ProRS can inadvertently accommodate and process non-cognate amino acids such as alanine and cysteine, to avoid such errors it has two additional distinct editing activities against alanine. One activity is designated as 'pretransfer' editing and involves the tRNA(Pro)-independent hydrolysis of activated Ala-AMP. The other activity is designated 'posttransfer' editing and involves deacylation of mischarged Ala-tRNA(Pro). The misacylated Cys-tRNA(Pro) is not edited by ProRS. The protein is Proline--tRNA ligase of Clostridium botulinum (strain Eklund 17B / Type B).